Consider the following 937-residue polypeptide: Scaffold attachment factor B1 (937 aa).

Positions 1–35 (MAETLSGLGDASAAGAAAVSSAASETGTRRLSDLR) are disordered. A2 bears the N-acetylalanine mark. Residues 11–24 (ASAAGAAAVSSAAS) show a composition bias toward low complexity. S24 and S55 each carry phosphoserine. Residues 31–65 (LSDLRVIDLRAELKKRNLDSSGNKSVLMERLKKAI) enclose the SAP domain. Residues 64–117 (AIEDEGGNPDEIEVTSECNKKMPKRPSKGRKPEDEGVEDNGLEENSGDGQEDVE) form a disordered region. The segment covering 67 to 77 (DEGGNPDEIEV) has biased composition (acidic residues). S79 carries the post-translational modification Phosphoserine. Acidic residues predominate over residues 98–117 (EGVEDNGLEENSGDGQEDVE). Residues K172 and K186 each participate in a glycyl lysine isopeptide (Lys-Gly) (interchain with G-Cter in SUMO2) cross-link. A Phosphothreonine modification is found at T188. 3 positions are modified to phosphoserine: S195, S197, and S209. A disordered region spans residues 222-429 (GETCKSEPVK…EKGRSSCGRN (208 aa)). The span at 225–234 (CKSEPVKEEG) shows a compositional bias: basic and acidic residues. Residue K231 forms a Glycyl lysine isopeptide (Lys-Gly) (interchain with G-Cter in SUMO) linkage. Residues 268–287 (EEEEEEEEEDQEEEQEEEGD) are compositionally biased toward acidic residues. A Glycyl lysine isopeptide (Lys-Gly) (interchain with G-Cter in SUMO) cross-link involves residue K316. Positions 341–356 (EQSSTAAQLPEATSQE) are enriched in polar residues. The segment covering 370-380 (QDSKEDVKKFA) has biased composition (basic and acidic residues). A Glycyl lysine isopeptide (Lys-Gly) (interchain with G-Cter in SUMO2) cross-link involves residue K403. S405 and S406 each carry phosphoserine. A compositionally biased stretch (basic and acidic residues) spans 412-423 (DTKRLSREEKGR). K414 is covalently cross-linked (Glycyl lysine isopeptide (Lys-Gly) (interchain with G-Cter in SUMO2)). An RRM domain is found at 428-506 (RNFWVSGLSS…KMISVEKAKS (79 aa)). S437 is modified (phosphoserine). Composition is skewed to basic and acidic residues over residues 499–573 (ISVE…ERSR) and 581–592 (GTERTVVMDKSK). Disordered regions lie at residues 499–661 (ISVE…WERE), 684–738 (RMER…YEVD), and 771–937 (FDHR…TRRY). Glycyl lysine isopeptide (Lys-Gly) (interchain with G-Cter in SUMO2) cross-links involve residues K505, K536, K565, and K592. The interaction with POLR2A; SFRS1; SFRS9 and SFRS10 stretch occupies residues 550–814 (TDDGSTEKSK…RHGGPERHGR (265 aa)). Residue K600 forms a Glycyl lysine isopeptide (Lys-Gly) (interchain with G-Cter in SUMO1); alternate linkage. Residue K600 forms a Glycyl lysine isopeptide (Lys-Gly) (interchain with G-Cter in SUMO2); alternate linkage. A phosphoserine mark is found at S602, S604, S623, and S626. Over residues 603–661 (GSKERASKSQDRKSASREKRSVVSFDKVKESRKSRDSESRRERERSEREQRLQAQWERE) the composition is skewed to basic and acidic residues. Positions 621–638 (KRSVVSFDKVKESRKSRD) match the Nuclear localization signal motif. Residues 621–937 (KRSVVSFDKV…PSDARFTRRY (317 aa)) are interaction with SAFB2. The residue at position 629 (K629) is an N6-acetyllysine. Positions 652–726 (QRLQAQWERE…RQQELRYEQE (75 aa)) form a coiled coil. Positions 771–818 (FDHRDRGRYPNHSVDRREGSRSMMGDREGQHYPERHGGPERHGRDSRD) are enriched in basic and acidic residues. R832 is subject to Omega-N-methylarginine. Basic and acidic residues-rich tracts occupy residues 838 to 854 (PRRDWGEHGRRLEDDRA) and 863 to 873 (MMERDHKRWQG). K869 is covalently cross-linked (Glycyl lysine isopeptide (Lys-Gly) (interchain with G-Cter in SUMO2)). An asymmetric dimethylarginine mark is found at R890, R896, R906, and R912. The span at 927-937 (RPSDARFTRRY) shows a compositional bias: basic and acidic residues.

As to quaternary structure, monomer and homodimer. Forms heterodimers with SAFB2. Interacts with KHDRBS3. Interacts with CLK2. Interacts with POLR2A, ASF/SRSF1, SRp30c/SRFS9 and TRA2B/SFRS10. Interacts with SRPK1 and inhibits its activity. Interacts with RBMX. Interacts with FUS. Interacts with ZBED4. Post-translationally, sumoylated by PIAS1 with SUMO1 and SUMO2/3, desumoylated by SENP1. Sumoylation is required for transcriptional repressor activity.

The protein localises to the nucleus. Its function is as follows. Binds to scaffold/matrix attachment region (S/MAR) DNA and forms a molecular assembly point to allow the formation of a 'transcriptosomal' complex (consisting of SR proteins and RNA polymerase II) coupling transcription and RNA processing. Functions as an estrogen receptor corepressor and can also bind to the HSP27 promoter and decrease its transcription. Thereby acts as a negative regulator of cell proliferation. When associated with RBMX, binds to and stimulates transcription from the SREBF1 promoter. The protein is Scaffold attachment factor B1 (Safb) of Mus musculus (Mouse).